Consider the following 166-residue polypeptide: Large ribosomal subunit protein uL10 (166 aa).

This sequence belongs to the universal ribosomal protein uL10 family. Part of the ribosomal stalk of the 50S ribosomal subunit. The N-terminus interacts with L11 and the large rRNA to form the base of the stalk. The C-terminus forms an elongated spine to which L12 dimers bind in a sequential fashion forming a multimeric L10(L12)X complex.

Forms part of the ribosomal stalk, playing a central role in the interaction of the ribosome with GTP-bound translation factors. The chain is Large ribosomal subunit protein uL10 from Geobacillus sp. (strain WCH70).